We begin with the raw amino-acid sequence, 401 residues long: MLRWMTAGESHGPALVAVLEGMVAGVEVTTADIAAELERRKLGFGRSPRMNFEADELEIIGGVRHGRTQGGPVAVRIANTEWPKWEQVMAADPVDPDVLASLARNEPLTRPRPGHADLAGMQKYGFEESRPVLERASARETAARVAVGTVARHFLRQLLGVEILSHVVSLGGVSAESDHLPGPDDLKAIDDNPVRAFGDAATERMMAEVDAAKKDGDTLGGVVEVIAYGLPPGIGSHVHWDRKLDARLAGALMSIQAIKGVEIGEGFANAHRRGSAAHDEIYPAEGERWVRRGSNRAGGLEGGITNGEPLVVRAAKKPISSLPRALATVDVVTGEPAQAMHQRSDITAVPRAAVVAETMVALVLAEAVLEKFGGDSLPETRRNVEGYLAGLRERAEKRQVR.

Residues Arg-40 and Arg-46 each contribute to the NADP(+) site. Residues 135–137 (RAS), 256–257 (QA), Gly-302, 317–321 (KPISS), and Arg-343 contribute to the FMN site.

Belongs to the chorismate synthase family. Homotetramer. FMNH2 serves as cofactor.

It carries out the reaction 5-O-(1-carboxyvinyl)-3-phosphoshikimate = chorismate + phosphate. Its pathway is metabolic intermediate biosynthesis; chorismate biosynthesis; chorismate from D-erythrose 4-phosphate and phosphoenolpyruvate: step 7/7. Functionally, catalyzes the anti-1,4-elimination of the C-3 phosphate and the C-6 proR hydrogen from 5-enolpyruvylshikimate-3-phosphate (EPSP) to yield chorismate, which is the branch point compound that serves as the starting substrate for the three terminal pathways of aromatic amino acid biosynthesis. This reaction introduces a second double bond into the aromatic ring system. The polypeptide is Chorismate synthase (Saccharopolyspora erythraea (strain ATCC 11635 / DSM 40517 / JCM 4748 / NBRC 13426 / NCIMB 8594 / NRRL 2338)).